We begin with the raw amino-acid sequence, 183 residues long: Probable chorismate pyruvate-lyase (183 aa).

The substrate site is built by Arg-79, Leu-115, and Glu-168.

This sequence belongs to the UbiC family.

It localises to the cytoplasm. The catalysed reaction is chorismate = 4-hydroxybenzoate + pyruvate. It participates in cofactor biosynthesis; ubiquinone biosynthesis. Functionally, removes the pyruvyl group from chorismate, with concomitant aromatization of the ring, to provide 4-hydroxybenzoate (4HB) for the ubiquinone pathway. This is Probable chorismate pyruvate-lyase from Chromohalobacter salexigens (strain ATCC BAA-138 / DSM 3043 / CIP 106854 / NCIMB 13768 / 1H11).